Consider the following 317-residue polypeptide: L-lactate dehydrogenase (317 aa).

NAD(+)-binding residues include valine 16, aspartate 37, and tyrosine 68. Substrate-binding positions include glutamine 85, arginine 91, 123 to 126 (NPCD), and 151 to 154 (DSAR). 121-123 (ASN) serves as a coordination point for NAD(+). Histidine 178 (proton acceptor) is an active-site residue. A Phosphotyrosine modification is found at tyrosine 222. Substrate is bound at residue threonine 231.

This sequence belongs to the LDH/MDH superfamily. LDH family. Homotetramer.

It localises to the cytoplasm. The catalysed reaction is (S)-lactate + NAD(+) = pyruvate + NADH + H(+). It functions in the pathway fermentation; pyruvate fermentation to lactate; (S)-lactate from pyruvate: step 1/1. Functionally, catalyzes the conversion of lactate to pyruvate. This chain is L-lactate dehydrogenase, found in Mesoplasma florum (strain ATCC 33453 / NBRC 100688 / NCTC 11704 / L1) (Acholeplasma florum).